The primary structure comprises 164 residues: UPF0304 protein ECA3037 (164 aa).

It belongs to the UPF0304 family.

The polypeptide is UPF0304 protein ECA3037 (Pectobacterium atrosepticum (strain SCRI 1043 / ATCC BAA-672) (Erwinia carotovora subsp. atroseptica)).